The following is a 611-amino-acid chain: DNA mismatch repair protein MutL (611 aa).

Positions 353–387 are disordered; the sequence is NRQAAGGNHFATPAPAAAPRPASTASSSWQRQEPV. Residues 363–380 show a composition bias toward low complexity; the sequence is ATPAPAAAPRPASTASSS.

This sequence belongs to the DNA mismatch repair MutL/HexB family.

In terms of biological role, this protein is involved in the repair of mismatches in DNA. It is required for dam-dependent methyl-directed DNA mismatch repair. May act as a 'molecular matchmaker', a protein that promotes the formation of a stable complex between two or more DNA-binding proteins in an ATP-dependent manner without itself being part of a final effector complex. The sequence is that of DNA mismatch repair protein MutL from Erwinia tasmaniensis (strain DSM 17950 / CFBP 7177 / CIP 109463 / NCPPB 4357 / Et1/99).